Here is a 577-residue protein sequence, read N- to C-terminus: Acyl-coenzyme A synthetase ACSM2B, mitochondrial (577 aa).

Residues 1-46 (MHWLRKVQGLCTLWGTQMSSRTLYINSRQLVSLQWGHQEVPAKFNF) constitute a mitochondrion transit peptide. Residue Gln139 coordinates CoA. ATP contacts are provided by residues 221 to 229 (TSGTSGLPK), 359 to 364 (EFYGQT), Asp446, and Arg461. Residue Thr364 participates in substrate binding. 469 to 471 (SGY) lines the CoA pocket. Arg472 serves as a coordination point for substrate. Arg501 contacts CoA. Ser513 carries the phosphoserine modification. CoA contacts are provided by residues Lys532 and 540–542 (YPR). Lys557 contacts ATP.

Belongs to the ATP-dependent AMP-binding enzyme family. In terms of assembly, monomer. The cofactor is Mg(2+). Mn(2+) is required as a cofactor. Detected in liver.

Its subcellular location is the mitochondrion. The catalysed reaction is a medium-chain fatty acid + ATP + CoA = a medium-chain fatty acyl-CoA + AMP + diphosphate. It catalyses the reaction benzoate + ATP + CoA = benzoyl-CoA + AMP + diphosphate. It carries out the reaction hexanoate + ATP + CoA = hexanoyl-CoA + AMP + diphosphate. The enzyme catalyses butanoate + ATP + CoA = butanoyl-CoA + AMP + diphosphate. The catalysed reaction is octanoate + ATP + CoA = octanoyl-CoA + AMP + diphosphate. It catalyses the reaction decanoate + ATP + CoA = decanoyl-CoA + AMP + diphosphate. Its activity is regulated as follows. Activated by monovalent cations, such as potassium, rubidium or ammonium. In terms of biological role, catalyzes the activation of fatty acids by CoA to produce an acyl-CoA, the first step in fatty acid metabolism. Capable of activating medium-chain fatty acids (e.g. butyric (C4) to decanoic (C10) acids), and certain carboxylate-containing xenobiotics, e.g. benzoate. The chain is Acyl-coenzyme A synthetase ACSM2B, mitochondrial (ACSM2B) from Homo sapiens (Human).